Consider the following 278-residue polypeptide: Large ribosomal subunit protein uL2 (278 aa).

Disordered stretches follow at residues 32–57 (ALTE…IGGG) and 221–278 (RGVA…KKKR). The segment covering 269–278 (IRSRHAKKKR) has biased composition (basic residues).

Belongs to the universal ribosomal protein uL2 family. As to quaternary structure, part of the 50S ribosomal subunit. Forms a bridge to the 30S subunit in the 70S ribosome.

One of the primary rRNA binding proteins. Required for association of the 30S and 50S subunits to form the 70S ribosome, for tRNA binding and peptide bond formation. It has been suggested to have peptidyltransferase activity; this is somewhat controversial. Makes several contacts with the 16S rRNA in the 70S ribosome. The chain is Large ribosomal subunit protein uL2 from Zymomonas mobilis subsp. mobilis (strain ATCC 31821 / ZM4 / CP4).